Reading from the N-terminus, the 199-residue chain is Protein GrpE (199 aa).

Basic and acidic residues predominate over residues 1–24; that stretch reads MSKQNKKDWKKFKDEHKEEHKVEN. Residues 1-47 form a disordered region; it reads MSKQNKKDWKKFKDEHKEEHKVENEILEEEIDEKSQHQEPALGHPSY.

This sequence belongs to the GrpE family. Homodimer.

Its subcellular location is the cytoplasm. Its function is as follows. Participates actively in the response to hyperosmotic and heat shock by preventing the aggregation of stress-denatured proteins, in association with DnaK and GrpE. It is the nucleotide exchange factor for DnaK and may function as a thermosensor. Unfolded proteins bind initially to DnaJ; upon interaction with the DnaJ-bound protein, DnaK hydrolyzes its bound ATP, resulting in the formation of a stable complex. GrpE releases ADP from DnaK; ATP binding to DnaK triggers the release of the substrate protein, thus completing the reaction cycle. Several rounds of ATP-dependent interactions between DnaJ, DnaK and GrpE are required for fully efficient folding. This Legionella pneumophila (strain Paris) protein is Protein GrpE.